We begin with the raw amino-acid sequence, 237 residues long: UPF0280 protein Mthe_1297 (237 aa).

The protein belongs to the UPF0280 family.

In Methanothrix thermoacetophila (strain DSM 6194 / JCM 14653 / NBRC 101360 / PT) (Methanosaeta thermophila), this protein is UPF0280 protein Mthe_1297.